Reading from the N-terminus, the 4760-residue chain is Nonribosomal peptide synthetase cm3A (4760 aa).

A compositionally biased stretch (polar residues) spans 1–12 (MKHLASSENMPT). A disordered region spans residues 1–24 (MKHLASSENMPTPAQDRAPSPSAM). The 77-residue stretch at 19-95 (PSPSAMQQEI…ELSRSAECQL (77 aa)) folds into the Carrier 1 domain. S56 bears the O-(pantetheine 4'-phosphoryl)serine mark. Condensation stretches follow at residues 142-570 (QDIF…EIEQ) and 178-571 (PGLS…IEQL). The interval 591–984 (DEQARLCPDA…GRRDTQVKLR (394 aa)) is adenylation 1. The 78-residue stretch at 1120–1197 (REATTLQLQI…KLTEKLGVPE (78 aa)) folds into the Carrier 2 domain. O-(pantetheine 4'-phosphoryl)serine is present on S1158. 2 condensation regions span residues 1210–1654 (FPLS…KTPS) and 1689–2125 (VEDM…NVTT). The tract at residues 2171-2551 (DGDLTYFELD…DRKDWQIKIR (381 aa)) is adenylation 2. The 79-residue stretch at 2684–2762 (LPSSETEKTV…ELAHAIDQRS (79 aa)) folds into the Carrier 3 domain. S2721 bears the O-(pantetheine 4'-phosphoryl)serine mark. Residues 2811-3203 (VEDIYPCTPL…RFKHIFGQLS (393 aa)) are condensation 4. The segment at 3255–3647 (SATTPDRPAV…GRADQQLKIR (393 aa)) is adenylation 3. A Carrier 4 domain is found at 3783–3857 (TRTEELMQSV…QLAQRATTDA (75 aa)). Condensation regions lie at residues 3869 to 4296 (EFRL…TLLC) and 4340 to 4757 (EDIY…EEMG).

Belongs to the nrps family.

It functions in the pathway secondary metabolite biosynthesis. Nonribosomal peptide synthetase; part of the gene cluster that mediates the biosynthesis of beauveriolides I and III, cyclodepsipeptides acting as inhibitors of the acyl-CoA:cholesterol acyltransferase. The HR-PKS cm3B initiates the biosynthesis of beauveriolides by iteratively catalyzing the formation of the linear polyketide chain. The ATP-dependent acetyl-CoA ligase cm3D converts the polyketide carboxylic acid to a CoA thioester which id shuttled to the first T domain in the NRPS cm3A by the acetyltransferase cm3C. Cm3A contains 13 domains and assembles the polyketide chain, L-phenylalanine, L-alanine, and D-leucine (or D-allo-isoleucine) to form beauveriolide I (or beauveriolide III). The production of both beauveriolides I and III suggests the substrate adaptability of cm3B, using different amino acids as substrates. The chain is Nonribosomal peptide synthetase cm3A from Cordyceps militaris (strain CM01) (Caterpillar fungus).